The chain runs to 66 residues: Large ribosomal subunit protein bL35 (66 aa).

A compositionally biased stretch (basic residues) spans 1-16; sequence MPKQKTHRASAKRFKR. The disordered stretch occupies residues 1-22; the sequence is MPKQKTHRASAKRFKRTGSGGL.

This sequence belongs to the bacterial ribosomal protein bL35 family.

The chain is Large ribosomal subunit protein bL35 from Streptococcus suis (strain 05ZYH33).